A 360-amino-acid chain; its full sequence is UDP-N-acetylglucosamine--N-acetylmuramyl-(pentapeptide) pyrophosphoryl-undecaprenol N-acetylglucosamine transferase (360 aa).

The UDP-N-acetyl-alpha-D-glucosamine site is built by serine 198 and glutamine 289.

It belongs to the glycosyltransferase 28 family. MurG subfamily.

It localises to the cell membrane. It catalyses the reaction Mur2Ac(oyl-L-Ala-gamma-D-Glu-L-Lys-D-Ala-D-Ala)-di-trans,octa-cis-undecaprenyl diphosphate + UDP-N-acetyl-alpha-D-glucosamine = beta-D-GlcNAc-(1-&gt;4)-Mur2Ac(oyl-L-Ala-gamma-D-Glu-L-Lys-D-Ala-D-Ala)-di-trans,octa-cis-undecaprenyl diphosphate + UDP + H(+). It participates in cell wall biogenesis; peptidoglycan biosynthesis. In terms of biological role, cell wall formation. Catalyzes the transfer of a GlcNAc subunit on undecaprenyl-pyrophosphoryl-MurNAc-pentapeptide (lipid intermediate I) to form undecaprenyl-pyrophosphoryl-MurNAc-(pentapeptide)GlcNAc (lipid intermediate II). This chain is UDP-N-acetylglucosamine--N-acetylmuramyl-(pentapeptide) pyrophosphoryl-undecaprenol N-acetylglucosamine transferase, found in Streptococcus pyogenes serotype M12 (strain MGAS2096).